A 155-amino-acid polypeptide reads, in one-letter code: Ribosome maturation factor RimP (155 aa).

The protein belongs to the RimP family.

The protein resides in the cytoplasm. Its function is as follows. Required for maturation of 30S ribosomal subunits. This chain is Ribosome maturation factor RimP, found in Listeria monocytogenes serotype 4a (strain HCC23).